We begin with the raw amino-acid sequence, 170 residues long: uncharacterized protein (170 aa).

5 helical membrane-spanning segments follow: residues 21–41 (NISL…AAVL), 55–75 (AYTS…TLLL), 86–106 (TGIA…YWLW), 117–137 (ISGV…VSLL), and 143–163 (FSAA…TLLP). The 127-residue stretch at 35–161 (IIFAAVLRWT…IMLATLGSTL (127 aa)) folds into the EamA domain.

This sequence belongs to the EamA transporter family.

It localises to the cell membrane. This is an uncharacterized protein from Haemophilus influenzae (strain ATCC 51907 / DSM 11121 / KW20 / Rd).